Consider the following 347-residue polypeptide: Anthranilate phosphoribosyltransferase (347 aa).

Residues glycine 88, glycine 91–aspartate 92, threonine 96, asparagine 98–threonine 101, lysine 116–serine 124, and serine 128 each bind 5-phospho-alpha-D-ribose 1-diphosphate. Glycine 88 is an anthranilate binding site. Position 100 (serine 100) interacts with Mg(2+). Asparagine 119 is a binding site for anthranilate. Arginine 174 is an anthranilate binding site. Mg(2+) is bound by residues aspartate 232 and glutamate 233.

The protein belongs to the anthranilate phosphoribosyltransferase family. Homodimer. The cofactor is Mg(2+).

The catalysed reaction is N-(5-phospho-beta-D-ribosyl)anthranilate + diphosphate = 5-phospho-alpha-D-ribose 1-diphosphate + anthranilate. It functions in the pathway amino-acid biosynthesis; L-tryptophan biosynthesis; L-tryptophan from chorismate: step 2/5. In terms of biological role, catalyzes the transfer of the phosphoribosyl group of 5-phosphorylribose-1-pyrophosphate (PRPP) to anthranilate to yield N-(5'-phosphoribosyl)-anthranilate (PRA). The chain is Anthranilate phosphoribosyltransferase from Shewanella sp. (strain MR-7).